Reading from the N-terminus, the 126-residue chain is NADH-quinone oxidoreductase subunit A (126 aa).

The next 3 membrane-spanning stretches (helical) occupy residues 16–36 (ILVL…AAAI), 73–93 (ILFI…VAFG), and 95–115 (MSMT…VGFA).

Belongs to the complex I subunit 3 family. As to quaternary structure, NDH-1 is composed of 14 different subunits. Subunits NuoA, H, J, K, L, M, N constitute the membrane sector of the complex.

The protein resides in the cell inner membrane. It carries out the reaction a quinone + NADH + 5 H(+)(in) = a quinol + NAD(+) + 4 H(+)(out). NDH-1 shuttles electrons from NADH, via FMN and iron-sulfur (Fe-S) centers, to quinones in the respiratory chain. The immediate electron acceptor for the enzyme in this species is believed to be ubiquinone. Couples the redox reaction to proton translocation (for every two electrons transferred, four hydrogen ions are translocated across the cytoplasmic membrane), and thus conserves the redox energy in a proton gradient. This Rhodobacter capsulatus (Rhodopseudomonas capsulata) protein is NADH-quinone oxidoreductase subunit A.